The following is a 182-amino-acid chain: Putative CTD phosphatase-like protein 355R (182 aa).

The FCP1 homology domain maps to 1-180 (MKNIFLDLDN…MRLKDVLNRH (180 aa)).

Belongs to the IIV-6 355R family.

Functionally, may function as a phosphatase. In Invertebrate iridescent virus 6 (IIV-6), this protein is Putative CTD phosphatase-like protein 355R.